Consider the following 140-residue polypeptide: Organic hydroperoxide resistance protein-like 1 (140 aa).

This sequence belongs to the OsmC/Ohr family.

The sequence is that of Organic hydroperoxide resistance protein-like 1 from Staphylococcus epidermidis (strain ATCC 35984 / DSM 28319 / BCRC 17069 / CCUG 31568 / BM 3577 / RP62A).